Reading from the N-terminus, the 432-residue chain is Adenylosuccinate synthetase (432 aa).

Residues 12-18 (GDEGKGK) and 40-42 (GHT) contribute to the GTP site. Asp13 (proton acceptor) is an active-site residue. Asp13 and Gly40 together coordinate Mg(2+). Residues 13 to 16 (DEGK), 38 to 41 (NAGH), Thr130, Arg144, Gln225, Thr240, and Arg304 contribute to the IMP site. His41 functions as the Proton donor in the catalytic mechanism. Substrate is bound at residue 300–306 (STTGRPR). GTP contacts are provided by residues Arg306, 332 to 334 (KLD), and 414 to 416 (SVG).

Belongs to the adenylosuccinate synthetase family. In terms of assembly, homodimer. Requires Mg(2+) as cofactor.

It is found in the cytoplasm. It carries out the reaction IMP + L-aspartate + GTP = N(6)-(1,2-dicarboxyethyl)-AMP + GDP + phosphate + 2 H(+). Its pathway is purine metabolism; AMP biosynthesis via de novo pathway; AMP from IMP: step 1/2. Its function is as follows. Plays an important role in the de novo pathway of purine nucleotide biosynthesis. Catalyzes the first committed step in the biosynthesis of AMP from IMP. This is Adenylosuccinate synthetase from Geobacter sp. (strain M21).